The chain runs to 447 residues: Trigger factor (447 aa).

A PPIase FKBP-type domain is found at 188–273 (GDKLVIDFEG…VNDIQVAEDF (86 aa)).

This sequence belongs to the FKBP-type PPIase family. Tig subfamily.

The protein localises to the cytoplasm. It catalyses the reaction [protein]-peptidylproline (omega=180) = [protein]-peptidylproline (omega=0). Its function is as follows. Involved in protein export. Acts as a chaperone by maintaining the newly synthesized protein in an open conformation. Functions as a peptidyl-prolyl cis-trans isomerase. This is Trigger factor from Wolbachia sp. subsp. Brugia malayi (strain TRS).